The following is a 734-amino-acid chain: Photosystem I P700 chlorophyll a apoprotein A2 (734 aa).

The next 8 helical transmembrane spans lie at 46-69 (IFAS…FHVA), 135-158 (LYTG…LHLQ), 175-199 (LNHH…HVAI), 273-291 (IAHH…GHMY), 330-353 (IHFQ…QHMY), 369-395 (AALY…IFFI), 417-439 (AIIS…LYVH), and 517-535 (FLVH…LILV). 2 residues coordinate [4Fe-4S] cluster: Cys559 and Cys568. A run of 2 helical transmembrane segments spans residues 575–596 (AFYL…YWHW) and 643–665 (LSVW…MFLI). Residues His654, Met662, and Tyr670 each contribute to the chlorophyll a site. Trp671 provides a ligand contact to phylloquinone. The chain crosses the membrane as a helical span at residues 707–727 (LVGLAHFSVGYIFTYAAFLIA).

Belongs to the PsaA/PsaB family. The PsaA/B heterodimer binds the P700 chlorophyll special pair and subsequent electron acceptors. PSI consists of a core antenna complex that captures photons, and an electron transfer chain that converts photonic excitation into a charge separation. The eukaryotic PSI reaction center is composed of at least 11 subunits. The cofactor is P700 is a chlorophyll a/chlorophyll a' dimer, A0 is one or more chlorophyll a, A1 is one or both phylloquinones and FX is a shared 4Fe-4S iron-sulfur center..

The protein resides in the plastid. Its subcellular location is the chloroplast thylakoid membrane. It catalyses the reaction reduced [plastocyanin] + hnu + oxidized [2Fe-2S]-[ferredoxin] = oxidized [plastocyanin] + reduced [2Fe-2S]-[ferredoxin]. PsaA and PsaB bind P700, the primary electron donor of photosystem I (PSI), as well as the electron acceptors A0, A1 and FX. PSI is a plastocyanin-ferredoxin oxidoreductase, converting photonic excitation into a charge separation, which transfers an electron from the donor P700 chlorophyll pair to the spectroscopically characterized acceptors A0, A1, FX, FA and FB in turn. Oxidized P700 is reduced on the lumenal side of the thylakoid membrane by plastocyanin. This is Photosystem I P700 chlorophyll a apoprotein A2 from Aethionema cordifolium (Lebanon stonecress).